We begin with the raw amino-acid sequence, 275 residues long: Trans-aconitate 2-methyltransferase (275 aa).

This sequence belongs to the methyltransferase superfamily. Tam family.

The protein resides in the cytoplasm. It carries out the reaction trans-aconitate + S-adenosyl-L-methionine = (E)-3-(methoxycarbonyl)pent-2-enedioate + S-adenosyl-L-homocysteine. In terms of biological role, catalyzes the S-adenosylmethionine monomethyl esterification of trans-aconitate. The chain is Trans-aconitate 2-methyltransferase from Pseudomonas paraeruginosa (strain DSM 24068 / PA7) (Pseudomonas aeruginosa (strain PA7)).